Consider the following 354-residue polypeptide: Homer protein homolog 2 (354 aa).

The WH1 domain occupies 1-110 (MGEQPIFTTR…EKFQEVKEAA (110 aa)). Positions 92-122 (SEQQLTKFAEKFQEVKEAAKIAKDKTQEKIE) form a coiled coil. The span at 112–122 (IAKDKTQEKIE) shows a compositional bias: basic and acidic residues. A disordered region spans residues 112–166 (IAKDKTQEKIETSSNHSQESGRETPSSTQASSVNGTDDEKASHAGPANTHLKSEN). The segment covering 123-146 (TSSNHSQESGRETPSSTQASSVNG) has biased composition (polar residues). The stretch at 160-329 (THLKSENDKL…RHLKVELKSF (170 aa)) forms a coiled coil.

Belongs to the Homer family. Forms coiled-coil structures that mediate homo- and heteromultimerization. Interacts with NFATC2; interaction is reduced by AKT activation. Interacts with NFATC1 and NFATC4. Interacts with DAGLA (via PPXXF motif); this interaction is required for the cell membrane localization of DAGLA.

It localises to the cytoplasm. The protein localises to the cell membrane. The protein resides in the postsynaptic density. Its subcellular location is the synapse. It is found in the cell projection. It localises to the stereocilium. In terms of biological role, postsynaptic density scaffolding protein. Binds and cross-links cytoplasmic regions of GRM1, GRM5, ITPR1, DNM3, RYR1, RYR2, SHANK1 and SHANK3. By physically linking GRM1 and GRM5 with ER-associated ITPR1 receptors, it aids the coupling of surface receptors to intracellular calcium release. May also couple GRM1 to PI3 kinase through its interaction with AGAP2. Isoforms can be differently regulated and may play an important role in maintaining the plasticity at glutamatergic synapses. Required for normal hearing. Negatively regulates T cell activation by inhibiting the calcineurin-NFAT pathway. Acts by competing with calcineurin/PPP3CA for NFAT protein binding, hence preventing NFAT activation by PPP3CA. The protein is Homer protein homolog 2 of Homo sapiens (Human).